Here is a 370-residue protein sequence, read N- to C-terminus: Phosphate-binding protein PstS 3 (370 aa).

The signal sequence occupies residues 1–22; the sequence is MKLNRFGAAVGVLAAGALVLSA. Cys23 carries N-palmitoyl cysteine lipidation. The S-diacylglycerol cysteine moiety is linked to residue Cys23. Phosphate contacts are provided by residues 56–58, Ser86, Asp104, and 191–193; these read STA and SGT.

This sequence belongs to the PstS family. In terms of assembly, the complex is composed of two ATP-binding proteins (PstB), two transmembrane proteins (PstC and PstA) and a solute-binding protein (PstS).

It is found in the cell membrane. Its function is as follows. Part of the ABC transporter complex PstSACB involved in phosphate import. The protein is Phosphate-binding protein PstS 3 (pstS3) of Mycobacterium bovis (strain ATCC BAA-935 / AF2122/97).